The sequence spans 473 residues: Photosystem II CP43 reaction center protein (473 aa).

The propeptide occupies 1 to 14 (MKTLYSLRRFYPVE). Thr-15 carries the N-acetylthreonine modification. Residue Thr-15 is modified to Phosphothreonine. 5 helical membrane-spanning segments follow: residues 69–93 (LFEV…PHLA), 134–155 (LLGP…KDRN), 178–200 (KALY…RKIT), 255–275 (KPFA…LSYS), and 291–312 (WFNN…ASQA). Residue Glu-367 coordinates [CaMn4O5] cluster. A helical transmembrane segment spans residues 447–471 (RARAAAAGFEKGIDRDFEPVLSMTP).

This sequence belongs to the PsbB/PsbC family. PsbC subfamily. In terms of assembly, PSII is composed of 1 copy each of membrane proteins PsbA, PsbB, PsbC, PsbD, PsbE, PsbF, PsbH, PsbI, PsbJ, PsbK, PsbL, PsbM, PsbT, PsbX, PsbY, PsbZ, Psb30/Ycf12, at least 3 peripheral proteins of the oxygen-evolving complex and a large number of cofactors. It forms dimeric complexes. Requires Binds multiple chlorophylls and provides some of the ligands for the Ca-4Mn-5O cluster of the oxygen-evolving complex. It may also provide a ligand for a Cl- that is required for oxygen evolution. PSII binds additional chlorophylls, carotenoids and specific lipids. as cofactor.

It localises to the plastid. It is found in the chloroplast thylakoid membrane. In terms of biological role, one of the components of the core complex of photosystem II (PSII). It binds chlorophyll and helps catalyze the primary light-induced photochemical processes of PSII. PSII is a light-driven water:plastoquinone oxidoreductase, using light energy to abstract electrons from H(2)O, generating O(2) and a proton gradient subsequently used for ATP formation. This is Photosystem II CP43 reaction center protein from Lactuca sativa (Garden lettuce).